A 557-amino-acid polypeptide reads, in one-letter code: CTP synthase (557 aa).

Residues 1–272 (MARSKIVKHI…DSLVLKKLML (272 aa)) are amidoligase domain. Position 18 (Ser-18) interacts with CTP. Ser-18 is a UTP binding site. Position 19–24 (19–24 (SLGKGI)) interacts with ATP. Tyr-59 lines the L-glutamine pocket. Asp-76 provides a ligand contact to ATP. Asp-76 and Glu-146 together coordinate Mg(2+). CTP-binding positions include 153-155 (DIE), 193-198 (KTKPTQ), and Lys-229. UTP is bound by residues 193 to 198 (KTKPTQ) and Lys-229. The Glutamine amidotransferase type-1 domain occupies 299-543 (EIGVCGKYTK…VAEAKKFRDE (245 aa)). An L-glutamine-binding site is contributed by Gly-363. Cys-390 (nucleophile; for glutamine hydrolysis) is an active-site residue. Residues 391–394 (LGMQ), Glu-414, and Arg-471 each bind L-glutamine. Catalysis depends on residues His-516 and Glu-518.

It belongs to the CTP synthase family. Homotetramer.

The enzyme catalyses UTP + L-glutamine + ATP + H2O = CTP + L-glutamate + ADP + phosphate + 2 H(+). The catalysed reaction is L-glutamine + H2O = L-glutamate + NH4(+). It carries out the reaction UTP + NH4(+) + ATP = CTP + ADP + phosphate + 2 H(+). The protein operates within pyrimidine metabolism; CTP biosynthesis via de novo pathway; CTP from UDP: step 2/2. Allosterically activated by GTP, when glutamine is the substrate; GTP has no effect on the reaction when ammonia is the substrate. The allosteric effector GTP functions by stabilizing the protein conformation that binds the tetrahedral intermediate(s) formed during glutamine hydrolysis. Inhibited by the product CTP, via allosteric rather than competitive inhibition. Functionally, catalyzes the ATP-dependent amination of UTP to CTP with either L-glutamine or ammonia as the source of nitrogen. Regulates intracellular CTP levels through interactions with the four ribonucleotide triphosphates. The polypeptide is CTP synthase (Chloroherpeton thalassium (strain ATCC 35110 / GB-78)).